We begin with the raw amino-acid sequence, 556 residues long: Sensory neuron membrane protein 2 (556 aa).

The Cytoplasmic portion of the chain corresponds to 1–6 (MIHWSL). A helical membrane pass occupies residues 7 to 27 (IVSALGVCVAVLGGYCGWILF). Over 28–522 (PNMVHKKVEQ…KLINTLKTLN (495 aa)) the chain is Extracellular. Residues N66, N274, N310, and N324 are each glycosylated (N-linked (GlcNAc...) asparagine). Intrachain disulfides connect C320-C388 and C349-C415. The helical transmembrane segment at 523-543 (IVHWATLCGGIGVAVACLIYY) threads the bilayer. At 544–556 (IYQRGRVVEPPVK) the chain is on the cytoplasmic side.

This sequence belongs to the CD36 family. In terms of tissue distribution, detected in the head and to a lesser extent in legs and wings.

It localises to the cell membrane. Functionally, plays an olfactory role that is not restricted to pheromone sensitivity. In Drosophila melanogaster (Fruit fly), this protein is Sensory neuron membrane protein 2.